We begin with the raw amino-acid sequence, 379 residues long: Cytochrome b (379 aa).

4 consecutive transmembrane segments (helical) span residues 33-53 (FGSL…FLAM), 77-98 (WLIR…FIHV), 113-133 (WNIG…GYVL), and 178-198 (FFAF…VHLL). The heme b site is built by histidine 83 and histidine 97. The heme b site is built by histidine 182 and histidine 196. Histidine 201 contacts a ubiquinone. The next 4 helical transmembrane spans lie at 226–246 (TKDL…VLFF), 288–308 (LGGV…PLLN), 320–340 (VTQV…WIGG), and 347–367 (FTTI…ILIP).

It belongs to the cytochrome b family. As to quaternary structure, the cytochrome bc1 complex contains 11 subunits: 3 respiratory subunits (MT-CYB, CYC1 and UQCRFS1), 2 core proteins (UQCRC1 and UQCRC2) and 6 low-molecular weight proteins (UQCRH/QCR6, UQCRB/QCR7, UQCRQ/QCR8, UQCR10/QCR9, UQCR11/QCR10 and a cleavage product of UQCRFS1). This cytochrome bc1 complex then forms a dimer. Heme b serves as cofactor.

It localises to the mitochondrion inner membrane. Its function is as follows. Component of the ubiquinol-cytochrome c reductase complex (complex III or cytochrome b-c1 complex) that is part of the mitochondrial respiratory chain. The b-c1 complex mediates electron transfer from ubiquinol to cytochrome c. Contributes to the generation of a proton gradient across the mitochondrial membrane that is then used for ATP synthesis. The polypeptide is Cytochrome b (MT-CYB) (Akodon cursor (Cursor grass mouse)).